Consider the following 234-residue polypeptide: Leucyl/phenylalanyl-tRNA--protein transferase (234 aa).

It belongs to the L/F-transferase family.

It localises to the cytoplasm. It catalyses the reaction N-terminal L-lysyl-[protein] + L-leucyl-tRNA(Leu) = N-terminal L-leucyl-L-lysyl-[protein] + tRNA(Leu) + H(+). The enzyme catalyses N-terminal L-arginyl-[protein] + L-leucyl-tRNA(Leu) = N-terminal L-leucyl-L-arginyl-[protein] + tRNA(Leu) + H(+). It carries out the reaction L-phenylalanyl-tRNA(Phe) + an N-terminal L-alpha-aminoacyl-[protein] = an N-terminal L-phenylalanyl-L-alpha-aminoacyl-[protein] + tRNA(Phe). Its function is as follows. Functions in the N-end rule pathway of protein degradation where it conjugates Leu, Phe and, less efficiently, Met from aminoacyl-tRNAs to the N-termini of proteins containing an N-terminal arginine or lysine. The polypeptide is Leucyl/phenylalanyl-tRNA--protein transferase (Pseudoalteromonas atlantica (strain T6c / ATCC BAA-1087)).